Here is a 750-residue protein sequence, read N- to C-terminus: Photosystem I P700 chlorophyll a apoprotein A1 (750 aa).

The next 8 helical transmembrane spans lie at 70 to 93 (VFSA…FHGA), 156 to 179 (LYCT…FHYH), 195 to 219 (LNHH…HVSL), 291 to 309 (IAHH…GHMY), 346 to 369 (WHAQ…HHMY), 385 to 411 (LSLF…IFMV), 433 to 455 (AIIS…LYIH), and 531 to 549 (FLVH…LILL). Cys-573 and Cys-582 together coordinate [4Fe-4S] cluster. 2 helical membrane passes run 589 to 610 (HVFL…HFSW) and 664 to 686 (LSAY…MFLF). His-675 lines the chlorophyll a' pocket. Met-683 and Tyr-691 together coordinate chlorophyll a. Trp-692 is a binding site for phylloquinone. Residues 724–744 (AVGVTHYLLGGIATTWAFFLA) traverse the membrane as a helical segment.

The protein belongs to the PsaA/PsaB family. As to quaternary structure, the PsaA/B heterodimer binds the P700 chlorophyll special pair and subsequent electron acceptors. PSI consists of a core antenna complex that captures photons, and an electron transfer chain that converts photonic excitation into a charge separation. The eukaryotic PSI reaction center is composed of at least 11 subunits. The cofactor is P700 is a chlorophyll a/chlorophyll a' dimer, A0 is one or more chlorophyll a, A1 is one or both phylloquinones and FX is a shared 4Fe-4S iron-sulfur center..

It is found in the plastid. The protein localises to the chloroplast thylakoid membrane. The catalysed reaction is reduced [plastocyanin] + hnu + oxidized [2Fe-2S]-[ferredoxin] = oxidized [plastocyanin] + reduced [2Fe-2S]-[ferredoxin]. In terms of biological role, psaA and PsaB bind P700, the primary electron donor of photosystem I (PSI), as well as the electron acceptors A0, A1 and FX. PSI is a plastocyanin-ferredoxin oxidoreductase, converting photonic excitation into a charge separation, which transfers an electron from the donor P700 chlorophyll pair to the spectroscopically characterized acceptors A0, A1, FX, FA and FB in turn. Oxidized P700 is reduced on the lumenal side of the thylakoid membrane by plastocyanin. The chain is Photosystem I P700 chlorophyll a apoprotein A1 from Hordeum vulgare (Barley).